The sequence spans 540 residues: Tyrosine-protein kinase transforming protein erbB (540 aa).

The 268-residue stretch at 132–399 (FKKVKVLGFG…KMARDPPRYL (268 aa)) folds into the Protein kinase domain. Residues 138-146 (LGFGAFGTV) and lysine 165 contribute to the ATP site. Catalysis depends on aspartate 257, which acts as the Proton acceptor.

It belongs to the protein kinase superfamily. Tyr protein kinase family. EGF receptor subfamily.

It carries out the reaction L-tyrosyl-[protein] + ATP = O-phospho-L-tyrosyl-[protein] + ADP + H(+). The polypeptide is Tyrosine-protein kinase transforming protein erbB (V-ERBB) (Avian erythroblastosis virus (strain ts167)).